The chain runs to 397 residues: Enoyl-[acyl-carrier-protein] reductase [NADH] (397 aa).

NAD(+)-binding positions include 47–52, 73–74, 110–111, and 138–139; these read GASTGY, LE, DA, and LA. Tyr-224 lines the substrate pocket. The active-site Proton donor is the Tyr-234. NAD(+) contacts are provided by residues Lys-243 and 272–274; that span reads LVT.

It belongs to the TER reductase family. In terms of assembly, monomer.

The enzyme catalyses a 2,3-saturated acyl-[ACP] + NAD(+) = a (2E)-enoyl-[ACP] + NADH + H(+). The protein operates within lipid metabolism; fatty acid biosynthesis. In terms of biological role, involved in the final reduction of the elongation cycle of fatty acid synthesis (FAS II). Catalyzes the reduction of a carbon-carbon double bond in an enoyl moiety that is covalently linked to an acyl carrier protein (ACP). In Methylobacillus flagellatus (strain ATCC 51484 / DSM 6875 / VKM B-1610 / KT), this protein is Enoyl-[acyl-carrier-protein] reductase [NADH].